Here is a 177-residue protein sequence, read N- to C-terminus: Putative pre-16S rRNA nuclease (177 aa).

The tract at residues 1-20 (MVATQQGPDRPGIDDPGRGR) is disordered.

Belongs to the YqgF nuclease family.

Its subcellular location is the cytoplasm. Functionally, could be a nuclease involved in processing of the 5'-end of pre-16S rRNA. In Rhodococcus erythropolis (strain PR4 / NBRC 100887), this protein is Putative pre-16S rRNA nuclease.